We begin with the raw amino-acid sequence, 244 residues long: MTRKTDDIFAAPLQEMIDFKFDERVVAVFPDMIQRSVPGYGMIISNIGILAAKYAQAGSHCYDLGCSLGAATLSMRQRISQPNCDIIAVDNSPAMIERGRELLARDSQPTVPVALICANIQDVVIENASVVVLNFTLQFIPPEQRLALIKRIHAGLRPGGILILSEKIAFSEPARQHFHVEMHHDFKRANGYSDMEISQKRSALENVMIPETVACHQERLLQAGFSSSELWFQCFNFASMVAFK.

Residues tyrosine 40, 65-67 (GCS), 90-91 (DN), asparagine 134, and arginine 201 contribute to the S-adenosyl-L-methionine site.

The protein belongs to the class I-like SAM-binding methyltransferase superfamily. Cx-SAM synthase family. In terms of assembly, homodimer.

It catalyses the reaction prephenate + S-adenosyl-L-methionine = carboxy-S-adenosyl-L-methionine + 3-phenylpyruvate + H2O. Functionally, catalyzes the conversion of S-adenosyl-L-methionine (SAM) to carboxy-S-adenosyl-L-methionine (Cx-SAM). In Citrifermentans bemidjiense (strain ATCC BAA-1014 / DSM 16622 / JCM 12645 / Bem) (Geobacter bemidjiensis), this protein is Carboxy-S-adenosyl-L-methionine synthase.